Here is a 682-residue protein sequence, read N- to C-terminus: Probable potassium transport system protein Kup (682 aa).

The next 12 helical transmembrane spans lie at 13 to 33 (GLLV…LYVM), 55 to 75 (ISLI…LIAL), 98 to 118 (WLVI…TLTP), 138 to 158 (IPVP…LFLF), 171 to 191 (TFGP…IMNL), 217 to 237 (VGVL…ALYS), 250 to 270 (SWPY…VWIL), 295 to 315 (FFAI…LITG), 344 to 364 (LFIP…VFLF), 375 to 395 (GLAI…YLSL), 405 to 425 (VFLL…LAKF), and 428 to 448 (GGYV…IWYF).

It belongs to the HAK/KUP transporter (TC 2.A.72) family.

The protein resides in the cell membrane. It catalyses the reaction K(+)(in) + H(+)(in) = K(+)(out) + H(+)(out). Functionally, transport of potassium into the cell. Likely operates as a K(+):H(+) symporter. The protein is Probable potassium transport system protein Kup of Lactobacillus gasseri (strain ATCC 33323 / DSM 20243 / BCRC 14619 / CIP 102991 / JCM 1131 / KCTC 3163 / NCIMB 11718 / NCTC 13722 / AM63).